The primary structure comprises 277 residues: Probable endonuclease 4 (277 aa).

The Zn(2+) site is built by histidine 69, histidine 109, glutamate 145, aspartate 179, histidine 182, histidine 214, aspartate 227, histidine 229, and glutamate 259.

This sequence belongs to the AP endonuclease 2 family. Zn(2+) serves as cofactor.

It carries out the reaction Endonucleolytic cleavage to 5'-phosphooligonucleotide end-products.. Its function is as follows. Endonuclease IV plays a role in DNA repair. It cleaves phosphodiester bonds at apurinic or apyrimidinic (AP) sites, generating a 3'-hydroxyl group and a 5'-terminal sugar phosphate. The sequence is that of Probable endonuclease 4 from Bacteroides thetaiotaomicron (strain ATCC 29148 / DSM 2079 / JCM 5827 / CCUG 10774 / NCTC 10582 / VPI-5482 / E50).